The sequence spans 646 residues: Threonine--tRNA ligase (646 aa).

Positions M1–K61 constitute a TGS domain. Residues D242 to P541 are catalytic. Residues C337, H388, and H518 each contribute to the Zn(2+) site.

The protein belongs to the class-II aminoacyl-tRNA synthetase family. Homodimer. The cofactor is Zn(2+).

The protein resides in the cytoplasm. The enzyme catalyses tRNA(Thr) + L-threonine + ATP = L-threonyl-tRNA(Thr) + AMP + diphosphate + H(+). Catalyzes the attachment of threonine to tRNA(Thr) in a two-step reaction: L-threonine is first activated by ATP to form Thr-AMP and then transferred to the acceptor end of tRNA(Thr). Also edits incorrectly charged L-seryl-tRNA(Thr). The chain is Threonine--tRNA ligase from Bacteroides fragilis (strain YCH46).